A 539-amino-acid chain; its full sequence is 2,3-bisphosphoglycerate-independent phosphoglycerate mutase (539 aa).

Mn(2+) is bound by residues Asp37 and Ser86. Ser86 is an active-site residue. Residues His147, 177–178 (RD), Arg210, Arg216, 284–287 (RADR), and Lys359 contribute to the substrate site. Residues Asp426, His430, Asp467, His468, and His485 each contribute to the Mn(2+) site.

This sequence belongs to the BPG-independent phosphoglycerate mutase family. Mg(2+) serves as cofactor. The cofactor is Mn(2+). Expressed ubiquitously. High expression levels in the nerve ring region, intestine and body wall muscles.

It carries out the reaction (2R)-2-phosphoglycerate = (2R)-3-phosphoglycerate. The protein operates within carbohydrate degradation; glycolysis; pyruvate from D-glyceraldehyde 3-phosphate: step 3/5. Activity is not affected by 2,3-bisphosphoglycerate. Its function is as follows. Catalyzes the interconversion of 2-phosphoglycerate and 3-phosphoglycerate. The chain is 2,3-bisphosphoglycerate-independent phosphoglycerate mutase from Caenorhabditis elegans.